The sequence spans 455 residues: Protein YmfN (455 aa).

This sequence belongs to the phage terminase family.

This Escherichia coli (strain K12) protein is Protein YmfN (ymfN).